The following is a 478-amino-acid chain: Septin-4 (478 aa).

The segment at 38 to 115 (VKDFSGNESC…RSPWGKLDPY (78 aa)) is disordered. Residues 95–108 (APAPLSPSARPRSP) show a composition bias toward low complexity. Phosphoserine is present on residues serine 117 and serine 118. A Septin-type G domain is found at 141 to 414 (KGFDFTLMVA…ENYRAQCIQS (274 aa)). The G1 motif stretch occupies residues 151 to 158 (GESGLGKS). GTP-binding positions include 151–158 (GESGLGKS) and threonine 185. Residues 208 to 211 (DTPG) form a G3 motif region. Residues 289-292 (AKAD) are G4 motif. Residue 290-298 (KADTLTPPE) coordinates GTP. Serine 325 carries the phosphoserine modification. GTP-binding residues include glycine 348 and arginine 363. Residues 425–448 (RNKLTRESGTDLPIPAVPPGTDPE) form a disordered region. Serine 432 carries the phosphoserine modification. Threonine 434 is modified (phosphothreonine). Positions 446 to 478 (DPETEKLIREKDEELRRMQEMLHKIQKQMKETY) form a coiled coil.

The protein belongs to the TRAFAC class TrmE-Era-EngA-EngB-Septin-like GTPase superfamily. Septin GTPase family. Septins polymerize into heterooligomeric protein complexes that form filaments, and can associate with cellular membranes, actin filaments and microtubules. GTPase activity is required for filament formation. Interacts with SEPTIN8. Component of a septin core octameric complex consisting of SEPTIN12, SEPTIN7, SEPTIN6 and SEPTIN2 or SEPTIN4 in the order 12-7-6-2-2-6-7-12 or 12-7-6-4-4-6-7-12. Interacts with SEPTIN14 (via C-terminus). Interacts with DYRK1A. Interacts with SLC6A3/DAT and SNCA/alpha-synuclein. Interacts with STX1A; in the striatum. Interacts with XIAP (via BIR3 domain) following the induction of apoptosis. Interacts with AREL1 (via HECT domain); in the cytoplasm following induction of apoptosis. Post-translationally, ubiquitinated by AREL1. Phosphorylated by DYRK1A.

It is found in the cytoplasm. The protein localises to the cell projection. Its subcellular location is the cilium. It localises to the flagellum. The protein resides in the cytoplasmic vesicle. It is found in the secretory vesicle. The protein localises to the axon. Its subcellular location is the dendrite. It localises to the perikaryon. The protein resides in the synapse. Filament-forming cytoskeletal GTPase. Pro-apoptotic protein involved in LGR5-positive intestinal stem cell and Paneth cell expansion in the intestines, via its interaction with XIAP. May also play a role in the regulation of cell fate in the intestine. Positive regulator of apoptosis involved in hematopoietic stem cell homeostasis; via its interaction with XIAP. Negative regulator of repair and hair follicle regeneration in response to injury, due to inhibition of hair follicle stem cell proliferation, potentially via its interaction with XIAP. Plays an important role in male fertility and sperm motility. During spermiogenesis, essential for the establishment of the annulus (a fibrous ring structure connecting the midpiece and the principal piece of the sperm flagellum) which is a requisite for the structural and mechanical integrity of the sperm. Involved in the migration of cortical neurons and the formation of neuron leading processes during embryonic development. Required for dopaminergic metabolism in presynaptic autoreceptors; potentially via activity as a presynaptic scaffold protein. The protein is Septin-4 of Pongo abelii (Sumatran orangutan).